Consider the following 220-residue polypeptide: Meiotic nuclear division protein 1 homolog (220 aa).

A coiled-coil region spans residues 76–147 (SKALHARKRR…KVEIEKYQEC (72 aa)).

Belongs to the MND1 family.

It localises to the nucleus. Functionally, required for proper homologous chromosome pairing and efficient cross-over and intragenic recombination during meiosis. Stimulates both DMC1- and RAD51-mediated homologous strand assimilation, which is required for the resolution of meiotic double-strand breaks. The protein is Meiotic nuclear division protein 1 homolog of Danio rerio (Zebrafish).